The chain runs to 150 residues: D-aminoacyl-tRNA deacylase (150 aa).

The Gly-cisPro motif, important for rejection of L-amino acids signature appears at 138–139 (GP).

The protein belongs to the DTD family. In terms of assembly, homodimer.

The protein resides in the cytoplasm. It catalyses the reaction glycyl-tRNA(Ala) + H2O = tRNA(Ala) + glycine + H(+). The catalysed reaction is a D-aminoacyl-tRNA + H2O = a tRNA + a D-alpha-amino acid + H(+). Functionally, an aminoacyl-tRNA editing enzyme that deacylates mischarged D-aminoacyl-tRNAs. Also deacylates mischarged glycyl-tRNA(Ala), protecting cells against glycine mischarging by AlaRS. Acts via tRNA-based rather than protein-based catalysis; rejects L-amino acids rather than detecting D-amino acids in the active site. By recycling D-aminoacyl-tRNA to D-amino acids and free tRNA molecules, this enzyme counteracts the toxicity associated with the formation of D-aminoacyl-tRNA entities in vivo and helps enforce protein L-homochirality. The polypeptide is D-aminoacyl-tRNA deacylase (Parabacteroides distasonis (strain ATCC 8503 / DSM 20701 / CIP 104284 / JCM 5825 / NCTC 11152)).